The following is a 718-amino-acid chain: DNA ligase (718 aa).

NAD(+) contacts are provided by residues 34–38, 83–84, and Glu-115; these read DAEYD and SL. Catalysis depends on Lys-117, which acts as the N6-AMP-lysine intermediate. Arg-138, Glu-186, Lys-302, and Lys-326 together coordinate NAD(+). Zn(2+) is bound by residues Cys-420, Cys-423, Cys-438, and Cys-444. The 91-residue stretch at 604–694 folds into the BRCT domain; it reads PKGDALAGKT…DRSAPAASNN (91 aa).

It belongs to the NAD-dependent DNA ligase family. LigA subfamily. Mg(2+) is required as a cofactor. It depends on Mn(2+) as a cofactor.

The enzyme catalyses NAD(+) + (deoxyribonucleotide)n-3'-hydroxyl + 5'-phospho-(deoxyribonucleotide)m = (deoxyribonucleotide)n+m + AMP + beta-nicotinamide D-nucleotide.. DNA ligase that catalyzes the formation of phosphodiester linkages between 5'-phosphoryl and 3'-hydroxyl groups in double-stranded DNA using NAD as a coenzyme and as the energy source for the reaction. It is essential for DNA replication and repair of damaged DNA. In Roseiflexus castenholzii (strain DSM 13941 / HLO8), this protein is DNA ligase.